The following is a 317-amino-acid chain: Acetylglutamate kinase (317 aa).

Residues 70 to 71 (GG), R92, and N191 each bind substrate.

This sequence belongs to the acetylglutamate kinase family. ArgB subfamily.

The protein localises to the cytoplasm. It catalyses the reaction N-acetyl-L-glutamate + ATP = N-acetyl-L-glutamyl 5-phosphate + ADP. It functions in the pathway amino-acid biosynthesis; L-arginine biosynthesis; N(2)-acetyl-L-ornithine from L-glutamate: step 2/4. In terms of biological role, catalyzes the ATP-dependent phosphorylation of N-acetyl-L-glutamate. The polypeptide is Acetylglutamate kinase (Corynebacterium glutamicum (strain R)).